The sequence spans 329 residues: Vitamin B12 import system permease protein BtuC (329 aa).

The next 9 helical transmembrane spans lie at 22 to 42, 64 to 84, 91 to 111, 115 to 135, 149 to 169, 187 to 207, 243 to 263, 277 to 297, and 305 to 325; these read LSVLMLLAVVLSLCAGDQWIA, LAVLLVGAALALSGAVMQALF, PGLLGVSNGAGVGLIAAVLLG, LPGWALGFCAIAGALIITLIL, LLAGVALGIICSAMMTWAIYF, GGVDWQQAWLMIALIPVSLWI, GWMVGVSVALAGSIGFIGLVI, ALLPGCALAGAIALLLADVIA, and ELPIGVVTATMGAPVFIWLLL.

The protein belongs to the binding-protein-dependent transport system permease family. FecCD subfamily. The complex is composed of two ATP-binding proteins (BtuD), two transmembrane proteins (BtuC) and a solute-binding protein (BtuF).

It is found in the cell inner membrane. Its function is as follows. Part of the ABC transporter complex BtuCDF involved in vitamin B12 import. Involved in the translocation of the substrate across the membrane. The polypeptide is Vitamin B12 import system permease protein BtuC (Citrobacter koseri (strain ATCC BAA-895 / CDC 4225-83 / SGSC4696)).